A 364-amino-acid polypeptide reads, in one-letter code: Caveolae-associated protein 4 (364 aa).

Residues methionine 1 to aspartate 24 are disordered. The stretch at valine 44–glutamine 77 forms a coiled coil. Serine 172 and serine 173 each carry phosphoserine. The stretch at phenylalanine 202–valine 226 forms a coiled coil. A compositionally biased stretch (basic and acidic residues) spans arginine 231–lysine 256. Disordered regions lie at residues arginine 231 to alanine 283 and serine 311 to proline 339. Tyrosine 326 carries the post-translational modification Phosphotyrosine. Residue threonine 336 is modified to Phosphothreonine. Serine 355 bears the Phosphoserine mark.

Belongs to the CAVIN family. As to quaternary structure, component of the CAVIN complex composed of CAVIN1, CAVIN2, CAVIN3 and CAVIN4. Interacts with CAVIN1, ADRA1A and ADRA1B. Interacts with CAVIN2; this augments the transactivation of NPPA. Interacts with CAV3. Interacts with MAPK1 and MAPK3.

Its subcellular location is the cytoplasm. The protein resides in the myofibril. The protein localises to the sarcomere. It is found in the cytosol. It localises to the cell membrane. Its subcellular location is the sarcolemma. The protein resides in the membrane. The protein localises to the caveola. In terms of biological role, modulates the morphology of formed caveolae in cardiomyocytes, but is not required for caveolar formation. Facilitates the recruitment of MAPK1/3 to caveolae within cardiomyocytes and regulates alpha-1 adrenergic receptor-induced hypertrophic responses in cardiomyocytes through MAPK1/3 activation. Contributes to proper membrane localization and stabilization of caveolin-3 (CAV3) in cardiomyocytes. Induces RHOA activation and activates NPPA transcription and myofibrillar organization through the Rho/ROCK signaling pathway. The protein is Caveolae-associated protein 4 of Homo sapiens (Human).